Consider the following 247-residue polypeptide: 3-deoxy-manno-octulosonate cytidylyltransferase (247 aa).

Belongs to the KdsB family.

It is found in the cytoplasm. The catalysed reaction is 3-deoxy-alpha-D-manno-oct-2-ulosonate + CTP = CMP-3-deoxy-beta-D-manno-octulosonate + diphosphate. The protein operates within nucleotide-sugar biosynthesis; CMP-3-deoxy-D-manno-octulosonate biosynthesis; CMP-3-deoxy-D-manno-octulosonate from 3-deoxy-D-manno-octulosonate and CTP: step 1/1. Its pathway is bacterial outer membrane biogenesis; lipopolysaccharide biosynthesis. Activates KDO (a required 8-carbon sugar) for incorporation into bacterial lipopolysaccharide in Gram-negative bacteria. This chain is 3-deoxy-manno-octulosonate cytidylyltransferase, found in Rhodopseudomonas palustris (strain BisA53).